A 512-amino-acid chain; its full sequence is MVNDMIETIEYFAQAQPDFPVYDCLGERRSYGQLKEDSDSIAALIESLKLGEKSPVLVFGAQSYDMLASFVALTKTGHAYIPVDVHSAPERVLSIIEIAQPSLIIAIEELPVSIDAIRVVSLAEIEAAKAAKAAFTMTSPVKGDDNYYIIFTSGTTGQPKGVQISHANLLSFTNWMIEDAEFAIPERPQMLAQPPYSFDLSVMYWAPTLALGGTLFALPKEMVSDFKRLFSTIAELPIGIWTSTPSFADMAMLNDDFCQEKMPRLTHFYFDGEELTVSTARKLFERFPDARIINAYGPTEATVALSAISITKDMIETYTRLPIGYPKPDSPTYIIDEAGNALEPGQQGEIIVTGPAVSKGYLNNPEKTAEAFFTFNGMPAYHTGDLGSFTEDNVLLYGGRLDFQIKYAGYRIELEDVSQQLNQSPLVESAVAVPRYNKEHKVQNLLAYVVLKDGVREQFARDLDITKAIKASVKDHMMAYMMPSKFIYREKLPLTPNGKIDIKFLINEVNHQ.

152-153 (TS) provides a ligand contact to ATP. Asp199 serves as a coordination point for D-alanine. Residue 294–299 (NAYGPT) coordinates ATP. Val303 contacts D-alanine. ATP-binding positions include Asp385, 397–400 (YGGR), and Lys499. Lys499 serves as a coordination point for D-alanine.

Belongs to the ATP-dependent AMP-binding enzyme family. DltA subfamily.

Its subcellular location is the cytoplasm. It carries out the reaction holo-[D-alanyl-carrier protein] + D-alanine + ATP = D-alanyl-[D-alanyl-carrier protein] + AMP + diphosphate. The protein operates within cell wall biogenesis; lipoteichoic acid biosynthesis. Catalyzes the first step in the D-alanylation of lipoteichoic acid (LTA), the activation of D-alanine and its transfer onto the D-alanyl carrier protein (Dcp) DltC. In an ATP-dependent two-step reaction, forms a high energy D-alanyl-AMP intermediate, followed by transfer of the D-alanyl residue as a thiol ester to the phosphopantheinyl prosthetic group of the Dcp. D-alanylation of LTA plays an important role in modulating the properties of the cell wall in Gram-positive bacteria, influencing the net charge of the cell wall. This chain is D-alanine--D-alanyl carrier protein ligase, found in Streptococcus equi subsp. equi (strain 4047).